Reading from the N-terminus, the 121-residue chain is Large ribosomal subunit protein uL14 (121 aa).

Belongs to the universal ribosomal protein uL14 family. As to quaternary structure, part of the 50S ribosomal subunit. Forms a cluster with proteins L3 and L19. In the 70S ribosome, L14 and L19 interact and together make contacts with the 16S rRNA in bridges B5 and B8.

Binds to 23S rRNA. Forms part of two intersubunit bridges in the 70S ribosome. The chain is Large ribosomal subunit protein uL14 from Prochlorococcus marinus (strain MIT 9303).